Here is a 309-residue protein sequence, read N- to C-terminus: Aromatic prenyltransferase (309 aa).

Belongs to the aromatic prenyltransferase family.

Its function is as follows. Prenyltransferase that attaches isoprenoid moieties to carbon atoms of aromatic substrates in an enzyme-catalyzed Friedel-Crafts reaction. Shows specificity for dimethylallyl diphosphate (DMAPP) and does not accept geranyl diphosphate (GPP) or isopentenyl diphosphate (IPP). Prenylates the artificial substrate 2,7-dihydroxynaphthalene (2,7-DHN), as well as dihydrophenazine-1-carboxylic acid and 4-hydroxybenzoic acid at lower levels. Only traces of products are detected with aspulvinone E or flaviolin as substrates; and no product is formed with L-tryptophan, L-tyrosine, or 4-hydroxyphenylpyruvate. Ptf seems no to be involved in the prenylation reaction in the biosynthesis of aspulvinone H and J and the physiological function of ptf remains unknown. The protein is Aromatic prenyltransferase of Botryotinia fuckeliana (strain B05.10) (Noble rot fungus).